We begin with the raw amino-acid sequence, 155 residues long: Urease accessory protein UreE (155 aa).

This sequence belongs to the UreE family.

The protein resides in the cytoplasm. Involved in urease metallocenter assembly. Binds nickel. Probably functions as a nickel donor during metallocenter assembly. In Synechococcus sp. (strain CC9311), this protein is Urease accessory protein UreE.